A 72-amino-acid chain; its full sequence is Translation initiation factor IF-1 (72 aa).

The region spanning 1–72 is the S1-like domain; the sequence is MSKEDSFEME…SKGRITYRAR (72 aa).

It belongs to the IF-1 family. As to quaternary structure, component of the 30S ribosomal translation pre-initiation complex which assembles on the 30S ribosome in the order IF-2 and IF-3, IF-1 and N-formylmethionyl-tRNA(fMet); mRNA recruitment can occur at any time during PIC assembly.

The protein localises to the cytoplasm. In terms of biological role, one of the essential components for the initiation of protein synthesis. Stabilizes the binding of IF-2 and IF-3 on the 30S subunit to which N-formylmethionyl-tRNA(fMet) subsequently binds. Helps modulate mRNA selection, yielding the 30S pre-initiation complex (PIC). Upon addition of the 50S ribosomal subunit IF-1, IF-2 and IF-3 are released leaving the mature 70S translation initiation complex. The sequence is that of Translation initiation factor IF-1 from Pseudomonas syringae pv. tomato (strain ATCC BAA-871 / DC3000).